A 303-amino-acid polypeptide reads, in one-letter code: Probable 5-dehydro-4-deoxyglucarate dehydratase (303 aa).

Belongs to the DapA family.

The enzyme catalyses 5-dehydro-4-deoxy-D-glucarate + H(+) = 2,5-dioxopentanoate + CO2 + H2O. Its pathway is carbohydrate acid metabolism; D-glucarate degradation; 2,5-dioxopentanoate from D-glucarate: step 2/2. The polypeptide is Probable 5-dehydro-4-deoxyglucarate dehydratase (Pseudomonas putida (strain W619)).